A 169-amino-acid chain; its full sequence is Steroid receptor-associated and regulated protein (169 aa).

As to quaternary structure, interacts with 14-3-3 proteins. Expressed in breast tumors with a higher expression level in estrogen receptor-positive cancers.

In terms of biological role, may regulate the transcriptional function of androgen and estrogen receptors. This is Steroid receptor-associated and regulated protein from Homo sapiens (Human).